The sequence spans 460 residues: tRNA modification GTPase MnmE (460 aa).

Residues Arg26, Glu88, and Arg127 each coordinate (6S)-5-formyl-5,6,7,8-tetrahydrofolate. Residues 222 to 381 enclose the TrmE-type G domain; the sequence is GLKVAIVGRP…LESAILSKVQ (160 aa). Residue Asn232 coordinates K(+). Residues 232–237, 251–257, and 276–279 contribute to the GTP site; these read NVGKSS, TELPGTT, and DTAG. Ser236 contacts Mg(2+). K(+) is bound by residues Thr251, Leu253, and Thr256. Thr257 lines the Mg(2+) pocket. Lys460 is a binding site for (6S)-5-formyl-5,6,7,8-tetrahydrofolate.

Belongs to the TRAFAC class TrmE-Era-EngA-EngB-Septin-like GTPase superfamily. TrmE GTPase family. In terms of assembly, homodimer. Heterotetramer of two MnmE and two MnmG subunits. The cofactor is K(+).

It is found in the cytoplasm. Exhibits a very high intrinsic GTPase hydrolysis rate. Involved in the addition of a carboxymethylaminomethyl (cmnm) group at the wobble position (U34) of certain tRNAs, forming tRNA-cmnm(5)s(2)U34. This is tRNA modification GTPase MnmE from Cyanothece sp. (strain PCC 7425 / ATCC 29141).